The sequence spans 602 residues: Elongation factor 4 (602 aa).

One can recognise a tr-type G domain in the interval 8 to 189; that stretch reads KNIRNFSIIA…KIITTIPAPS (182 aa). GTP contacts are provided by residues 20–25 and 136–139; these read DHGKST and NKID.

Belongs to the TRAFAC class translation factor GTPase superfamily. Classic translation factor GTPase family. LepA subfamily.

Its subcellular location is the cell inner membrane. It catalyses the reaction GTP + H2O = GDP + phosphate + H(+). Required for accurate and efficient protein synthesis under certain stress conditions. May act as a fidelity factor of the translation reaction, by catalyzing a one-codon backward translocation of tRNAs on improperly translocated ribosomes. Back-translocation proceeds from a post-translocation (POST) complex to a pre-translocation (PRE) complex, thus giving elongation factor G a second chance to translocate the tRNAs correctly. Binds to ribosomes in a GTP-dependent manner. The chain is Elongation factor 4 from Helicobacter pylori (strain Shi470).